Here is a 371-residue protein sequence, read N- to C-terminus: Queuine tRNA-ribosyltransferase (371 aa).

Catalysis depends on Asp-90, which acts as the Proton acceptor. Residues 90-94 (DSGGF), Asp-144, Gln-188, and Gly-215 contribute to the substrate site. Residues 246–252 (GVGTPED) form an RNA binding region. Catalysis depends on Asp-265, which acts as the Nucleophile. The RNA binding; important for wobble base 34 recognition stretch occupies residues 270-274 (TRNAR). Positions 303, 305, 308, and 334 each coordinate Zn(2+).

The protein belongs to the queuine tRNA-ribosyltransferase family. In terms of assembly, homodimer. Within each dimer, one monomer is responsible for RNA recognition and catalysis, while the other monomer binds to the replacement base PreQ1. It depends on Zn(2+) as a cofactor.

The enzyme catalyses 7-aminomethyl-7-carbaguanine + guanosine(34) in tRNA = 7-aminomethyl-7-carbaguanosine(34) in tRNA + guanine. Its pathway is tRNA modification; tRNA-queuosine biosynthesis. Its function is as follows. Catalyzes the base-exchange of a guanine (G) residue with the queuine precursor 7-aminomethyl-7-deazaguanine (PreQ1) at position 34 (anticodon wobble position) in tRNAs with GU(N) anticodons (tRNA-Asp, -Asn, -His and -Tyr). Catalysis occurs through a double-displacement mechanism. The nucleophile active site attacks the C1' of nucleotide 34 to detach the guanine base from the RNA, forming a covalent enzyme-RNA intermediate. The proton acceptor active site deprotonates the incoming PreQ1, allowing a nucleophilic attack on the C1' of the ribose to form the product. After dissociation, two additional enzymatic reactions on the tRNA convert PreQ1 to queuine (Q), resulting in the hypermodified nucleoside queuosine (7-(((4,5-cis-dihydroxy-2-cyclopenten-1-yl)amino)methyl)-7-deazaguanosine). This Neisseria gonorrhoeae (strain ATCC 700825 / FA 1090) protein is Queuine tRNA-ribosyltransferase.